The following is a 208-amino-acid chain: Outer-membrane lipoprotein carrier protein (208 aa).

The first 22 residues, 1–22 (MLKPLSQLVCALPLVVAASSYA), serve as a signal peptide directing secretion.

The protein belongs to the LolA family. As to quaternary structure, monomer.

The protein resides in the periplasm. Its function is as follows. Participates in the translocation of lipoproteins from the inner membrane to the outer membrane. Only forms a complex with a lipoprotein if the residue after the N-terminal Cys is not an aspartate (The Asp acts as a targeting signal to indicate that the lipoprotein should stay in the inner membrane). The polypeptide is Outer-membrane lipoprotein carrier protein (Shewanella loihica (strain ATCC BAA-1088 / PV-4)).